Reading from the N-terminus, the 152-residue chain is Transcriptional regulator MraZ (152 aa).

2 SpoVT-AbrB domains span residues 5–52 (VNQL…PLPE) and 81–124 (AQEL…DESL).

It belongs to the MraZ family. In terms of assembly, forms oligomers.

The protein localises to the cytoplasm. Its subcellular location is the nucleoid. This chain is Transcriptional regulator MraZ, found in Halorhodospira halophila (strain DSM 244 / SL1) (Ectothiorhodospira halophila (strain DSM 244 / SL1)).